Reading from the N-terminus, the 318-residue chain is tRNA dimethylallyltransferase (318 aa).

An ATP-binding site is contributed by 16–23 (GPTASGKS). 18 to 23 (TASGKS) is a binding site for substrate. Interaction with substrate tRNA stretches follow at residues 41–44 (DSRQ) and 165–169 (QRLIR).

The protein belongs to the IPP transferase family. In terms of assembly, monomer. Requires Mg(2+) as cofactor.

It catalyses the reaction adenosine(37) in tRNA + dimethylallyl diphosphate = N(6)-dimethylallyladenosine(37) in tRNA + diphosphate. Catalyzes the transfer of a dimethylallyl group onto the adenine at position 37 in tRNAs that read codons beginning with uridine, leading to the formation of N6-(dimethylallyl)adenosine (i(6)A). This Pelodictyon phaeoclathratiforme (strain DSM 5477 / BU-1) protein is tRNA dimethylallyltransferase.